Reading from the N-terminus, the 208-residue chain is Small ribosomal subunit protein uS2 (208 aa).

Residues lysine 189–serine 208 form a disordered region.

Belongs to the universal ribosomal protein uS2 family.

This chain is Small ribosomal subunit protein uS2 (rps2), found in Pyrobaculum aerophilum (strain ATCC 51768 / DSM 7523 / JCM 9630 / CIP 104966 / NBRC 100827 / IM2).